The chain runs to 583 residues: Arginine--tRNA ligase (583 aa).

Positions 131-141 match the 'HIGH' region motif; sequence ANPTGPMHVGH.

Belongs to the class-I aminoacyl-tRNA synthetase family. As to quaternary structure, monomer.

It is found in the cytoplasm. The catalysed reaction is tRNA(Arg) + L-arginine + ATP = L-arginyl-tRNA(Arg) + AMP + diphosphate. This is Arginine--tRNA ligase from Parvibaculum lavamentivorans (strain DS-1 / DSM 13023 / NCIMB 13966).